The chain runs to 332 residues: Probable ABC transporter permease protein YphD (332 aa).

The next 10 membrane-spanning stretches (helical) occupy residues 28–48 (GLLV…PGFI), 63–83 (IGIA…DVSV), 84–104 (GPMV…EVPL), 105–125 (AVAC…AGVL), 131–151 (VPSF…GLFM), 172–192 (FLGV…FVFI), 222–242 (VRIL…ILLA), 251–271 (GAAN…GTAL), 278–298 (LFGT…LVLL), and 303–323 (FFQQ…NILL).

Belongs to the binding-protein-dependent transport system permease family. AraH/RbsC subfamily.

Its subcellular location is the cell inner membrane. Its function is as follows. Probably part of the binding-protein-dependent transport system YphDEF. Probably responsible for the translocation of the substrate across the membrane. This is Probable ABC transporter permease protein YphD (yphD) from Escherichia coli (strain K12).